The chain runs to 432 residues: Serine hydroxymethyltransferase (432 aa).

Residues leucine 117 and 121–123 contribute to the (6S)-5,6,7,8-tetrahydrofolate site; that span reads GHL. Lysine 226 carries the post-translational modification N6-(pyridoxal phosphate)lysine. 366 to 368 provides a ligand contact to (6S)-5,6,7,8-tetrahydrofolate; sequence SPF.

This sequence belongs to the SHMT family. In terms of assembly, homodimer. Requires pyridoxal 5'-phosphate as cofactor.

Its subcellular location is the cytoplasm. It catalyses the reaction (6R)-5,10-methylene-5,6,7,8-tetrahydrofolate + glycine + H2O = (6S)-5,6,7,8-tetrahydrofolate + L-serine. Its pathway is one-carbon metabolism; tetrahydrofolate interconversion. The protein operates within amino-acid biosynthesis; glycine biosynthesis; glycine from L-serine: step 1/1. Its function is as follows. Catalyzes the reversible interconversion of serine and glycine with tetrahydrofolate (THF) serving as the one-carbon carrier. This reaction serves as the major source of one-carbon groups required for the biosynthesis of purines, thymidylate, methionine, and other important biomolecules. Also exhibits THF-independent aldolase activity toward beta-hydroxyamino acids, producing glycine and aldehydes, via a retro-aldol mechanism. This chain is Serine hydroxymethyltransferase, found in Salinibacter ruber (strain DSM 13855 / M31).